Reading from the N-terminus, the 135-residue chain is Transcription antitermination protein NusB (135 aa).

The protein belongs to the NusB family.

Functionally, involved in transcription antitermination. Required for transcription of ribosomal RNA (rRNA) genes. Binds specifically to the boxA antiterminator sequence of the ribosomal RNA (rrn) operons. The polypeptide is Transcription antitermination protein NusB (Bdellovibrio bacteriovorus (strain ATCC 15356 / DSM 50701 / NCIMB 9529 / HD100)).